The chain runs to 208 residues: Small ribosomal subunit protein uS4 (208 aa).

An S4 RNA-binding domain is found at 98–160 (QRLDNVVYRM…SKNNSQIVRA (63 aa)).

Belongs to the universal ribosomal protein uS4 family. Part of the 30S ribosomal subunit. Contacts protein S5. The interaction surface between S4 and S5 is involved in control of translational fidelity.

Its function is as follows. One of the primary rRNA binding proteins, it binds directly to 16S rRNA where it nucleates assembly of the body of the 30S subunit. Functionally, with S5 and S12 plays an important role in translational accuracy. In Sulfurimonas denitrificans (strain ATCC 33889 / DSM 1251) (Thiomicrospira denitrificans (strain ATCC 33889 / DSM 1251)), this protein is Small ribosomal subunit protein uS4.